Here is a 158-residue protein sequence, read N- to C-terminus: Transcription elongation factor GreA (158 aa).

This sequence belongs to the GreA/GreB family.

In terms of biological role, necessary for efficient RNA polymerase transcription elongation past template-encoded arresting sites. The arresting sites in DNA have the property of trapping a certain fraction of elongating RNA polymerases that pass through, resulting in locked ternary complexes. Cleavage of the nascent transcript by cleavage factors such as GreA or GreB allows the resumption of elongation from the new 3'terminus. GreA releases sequences of 2 to 3 nucleotides. The protein is Transcription elongation factor GreA of Rhizobium etli (strain CIAT 652).